The chain runs to 122 residues: Large ribosomal subunit protein uL14 (122 aa).

It belongs to the universal ribosomal protein uL14 family. Part of the 50S ribosomal subunit. Forms a cluster with proteins L3 and L19. In the 70S ribosome, L14 and L19 interact and together make contacts with the 16S rRNA in bridges B5 and B8.

Binds to 23S rRNA. Forms part of two intersubunit bridges in the 70S ribosome. The polypeptide is Large ribosomal subunit protein uL14 (Ureaplasma parvum serovar 3 (strain ATCC 27815 / 27 / NCTC 11736)).